Here is a 412-residue protein sequence, read N- to C-terminus: Histidine--tRNA ligase (412 aa).

Belongs to the class-II aminoacyl-tRNA synthetase family. In terms of assembly, homodimer.

It localises to the cytoplasm. It catalyses the reaction tRNA(His) + L-histidine + ATP = L-histidyl-tRNA(His) + AMP + diphosphate + H(+). This is Histidine--tRNA ligase from Rickettsia typhi (strain ATCC VR-144 / Wilmington).